Here is a 344-residue protein sequence, read N- to C-terminus: tRNA N6-adenosine threonylcarbamoyltransferase (344 aa).

Residues histidine 116 and histidine 120 each contribute to the Fe cation site. Substrate-binding positions include 138–142 (LVSGG), aspartate 171, glycine 184, aspartate 188, and asparagine 277. Residue aspartate 307 coordinates Fe cation.

Belongs to the KAE1 / TsaD family. Requires Fe(2+) as cofactor.

The protein resides in the cytoplasm. It catalyses the reaction L-threonylcarbamoyladenylate + adenosine(37) in tRNA = N(6)-L-threonylcarbamoyladenosine(37) in tRNA + AMP + H(+). Functionally, required for the formation of a threonylcarbamoyl group on adenosine at position 37 (t(6)A37) in tRNAs that read codons beginning with adenine. Is involved in the transfer of the threonylcarbamoyl moiety of threonylcarbamoyl-AMP (TC-AMP) to the N6 group of A37, together with TsaE and TsaB. TsaD likely plays a direct catalytic role in this reaction. In Latilactobacillus sakei subsp. sakei (strain 23K) (Lactobacillus sakei subsp. sakei), this protein is tRNA N6-adenosine threonylcarbamoyltransferase.